The sequence spans 382 residues: Mitogen-activated protein kinase 9 (382 aa).

A Protein kinase domain is found at 26–321; it reads YQQLKPIGSG…VDEALRHPYI (296 aa). Residues 33-38 and K55 each bind ATP; that span reads GSGAQG. D151 acts as the Proton acceptor in catalysis. A Phosphothreonine modification is found at T183. Positions 183–185 match the TXY motif; the sequence is TPY. A Phosphotyrosine modification is found at Y185.

This sequence belongs to the protein kinase superfamily. CMGC Ser/Thr protein kinase family. MAP kinase subfamily. Mg(2+) serves as cofactor. In terms of processing, dually phosphorylated on Thr-183 and Tyr-185, which activates the enzyme. In terms of tissue distribution, expressed in the neuroepithelium of developing brain at stages 16 to 26.

It catalyses the reaction L-seryl-[protein] + ATP = O-phospho-L-seryl-[protein] + ADP + H(+). The enzyme catalyses L-threonyl-[protein] + ATP = O-phospho-L-threonyl-[protein] + ADP + H(+). Its activity is regulated as follows. Activated by threonine and tyrosine phosphorylation. In terms of biological role, responds to activation by environmental stress and pro-inflammatory cytokines by phosphorylating a number of transcription factors, primarily components of AP-1 such as JUN and ATF2 and thus regulates AP-1 transcriptional activity. May play a role in the development of the central nervous system during embryogenesis. May play a role in the regulation of the circadian clock. The sequence is that of Mitogen-activated protein kinase 9 (MAPK9) from Gallus gallus (Chicken).